The chain runs to 254 residues: Sugar fermentation stimulation protein homolog (254 aa).

This sequence belongs to the SfsA family.

The sequence is that of Sugar fermentation stimulation protein homolog from Parasynechococcus marenigrum (strain WH8102).